Consider the following 131-residue polypeptide: Small ribosomal subunit protein bS6 (131 aa).

Residues 98 to 131 are disordered; sequence EASPMVKAKDERRERRDDFANETADDADAGDSEE. Positions 104 to 116 are enriched in basic and acidic residues; the sequence is KAKDERRERRDDF. A compositionally biased stretch (acidic residues) spans 120-131; sequence TADDADAGDSEE.

The protein belongs to the bacterial ribosomal protein bS6 family.

Its function is as follows. Binds together with bS18 to 16S ribosomal RNA. The protein is Small ribosomal subunit protein bS6 of Citrobacter koseri (strain ATCC BAA-895 / CDC 4225-83 / SGSC4696).